Reading from the N-terminus, the 353-residue chain is Photosystem II protein D1 (353 aa).

Thr2 carries the N-acetylthreonine modification. Phosphothreonine is present on Thr2. 3 helical membrane-spanning segments follow: residues 29–46 (YIGWFGVIMIPCLLTATS), 118–133 (HFLLGVACYMGREWEL), and 142–156 (WIAVAYSAPVAAATA). Residue His118 coordinates chlorophyll a. Tyr126 is a pheophytin a binding site. [CaMn4O5] cluster is bound by residues Asp170 and Glu189. A helical membrane pass occupies residues 197 to 218 (FHMLGVAGVFGGSLFSAMHGSL). His198 contacts chlorophyll a. A quinone contacts are provided by residues His215 and 264 to 265 (SF). His215 contributes to the Fe cation binding site. Fe cation is bound at residue His272. The helical transmembrane segment at 274-288 (FLAAWPVVGIWFTAL) threads the bilayer. [CaMn4O5] cluster-binding residues include His332, Glu333, Asp342, and Ala344. Residues 345–353 (SVEAPSVNA) constitute a propeptide that is removed on maturation.

The protein belongs to the reaction center PufL/M/PsbA/D family. PSII is composed of 1 copy each of membrane proteins PsbA, PsbB, PsbC, PsbD, PsbE, PsbF, PsbH, PsbI, PsbJ, PsbK, PsbL, PsbM, PsbT, PsbX, PsbY, PsbZ, Psb30/Ycf12, at least 3 peripheral proteins of the oxygen-evolving complex and a large number of cofactors. It forms dimeric complexes. The D1/D2 heterodimer binds P680, chlorophylls that are the primary electron donor of PSII, and subsequent electron acceptors. It shares a non-heme iron and each subunit binds pheophytin, quinone, additional chlorophylls, carotenoids and lipids. D1 provides most of the ligands for the Mn4-Ca-O5 cluster of the oxygen-evolving complex (OEC). There is also a Cl(-1) ion associated with D1 and D2, which is required for oxygen evolution. The PSII complex binds additional chlorophylls, carotenoids and specific lipids. serves as cofactor. Tyr-161 forms a radical intermediate that is referred to as redox-active TyrZ, YZ or Y-Z. In terms of processing, C-terminally processed by CTPA; processing is essential to allow assembly of the oxygen-evolving complex and thus photosynthetic growth.

It is found in the plastid. The protein localises to the chloroplast thylakoid membrane. It carries out the reaction 2 a plastoquinone + 4 hnu + 2 H2O = 2 a plastoquinol + O2. In terms of biological role, photosystem II (PSII) is a light-driven water:plastoquinone oxidoreductase that uses light energy to abstract electrons from H(2)O, generating O(2) and a proton gradient subsequently used for ATP formation. It consists of a core antenna complex that captures photons, and an electron transfer chain that converts photonic excitation into a charge separation. The D1/D2 (PsbA/PsbD) reaction center heterodimer binds P680, the primary electron donor of PSII as well as several subsequent electron acceptors. The protein is Photosystem II protein D1 of Oltmannsiellopsis viridis (Marine flagellate).